Consider the following 290-residue polypeptide: Eukaryotic translation initiation factor 3 subunit G (290 aa).

The interval 1–34 is disordered; that stretch reads MSRLGNRAADWADDEEFDDPSALPAQQVTTNKDG. In terms of domain architecture, RRM spans 210–288; it reads ATLRVTNVSE…LILRVEFAKR (79 aa).

It belongs to the eIF-3 subunit G family. In terms of assembly, component of the eukaryotic translation initiation factor 3 (eIF-3) complex.

It localises to the cytoplasm. Its function is as follows. RNA-binding component of the eukaryotic translation initiation factor 3 (eIF-3) complex, which is involved in protein synthesis of a specialized repertoire of mRNAs and, together with other initiation factors, stimulates binding of mRNA and methionyl-tRNAi to the 40S ribosome. The eIF-3 complex specifically targets and initiates translation of a subset of mRNAs involved in cell proliferation. This subunit can bind 18S rRNA. This chain is Eukaryotic translation initiation factor 3 subunit G, found in Neosartorya fischeri (strain ATCC 1020 / DSM 3700 / CBS 544.65 / FGSC A1164 / JCM 1740 / NRRL 181 / WB 181) (Aspergillus fischerianus).